The primary structure comprises 856 residues: Lon protease (856 aa).

One can recognise a Lon N-terminal domain in the interval 68 to 261 (FPVLPLRDIV…KVLGLMESEI (194 aa)). 412-419 (GPPGVGKT) contacts ATP. The 182-residue stretch at 647–828 (EDQVGVVTGL…DEVLHHALLR (182 aa)) folds into the Lon proteolytic domain. Residues Ser-734 and Lys-777 contribute to the active site.

This sequence belongs to the peptidase S16 family. As to quaternary structure, homohexamer. Organized in a ring with a central cavity.

Its subcellular location is the cytoplasm. It carries out the reaction Hydrolysis of proteins in presence of ATP.. Functionally, ATP-dependent serine protease that mediates the selective degradation of mutant and abnormal proteins as well as certain short-lived regulatory proteins. Required for cellular homeostasis and for survival from DNA damage and developmental changes induced by stress. Degrades polypeptides processively to yield small peptide fragments that are 5 to 10 amino acids long. Binds to DNA in a double-stranded, site-specific manner. The chain is Lon protease from Azorhizobium caulinodans (strain ATCC 43989 / DSM 5975 / JCM 20966 / LMG 6465 / NBRC 14845 / NCIMB 13405 / ORS 571).